A 100-amino-acid polypeptide reads, in one-letter code: Ribosomal biogenesis factor (100 aa).

At Ser19 the chain carries Phosphoserine. N6-acetyllysine is present on Lys21. Ser69 is subject to Phosphoserine.

As to quaternary structure, associates with the pre-60S ribosomal particles.

It localises to the nucleus. The protein localises to the nucleolus. Its function is as follows. Trans-acting factor in ribosome biogenesis required for efficient 40S and 60S subunit production. The protein is Ribosomal biogenesis factor (RBIS) of Bos taurus (Bovine).